A 101-amino-acid chain; its full sequence is Gamma-secretase subunit PEN-2 (101 aa).

At 1–17 (MNLERVSNEEKLNLCRK) the chain is on the cytoplasmic side. The segment at residues 18 to 36 (YYLGGFAFLPFLWLVNIFW) is an intramembrane region (helical). Over 37–57 (FFREAFLVPAYTEQSQIKGYV) the chain is Cytoplasmic. Residues 58-78 (WRSAVGFLFWVIVLTSWITIF) form a helical membrane-spanning segment. The Lumenal portion of the chain corresponds to 79–101 (QIYRPRWGALGDYLSFTIPLGTP).

The protein belongs to the PEN-2 family. The functional gamma-secretase complex is composed of at least four polypeptides: a presenilin homodimer (PSEN1 or PSEN2), nicastrin (NCSTN), APH1 (APH1A or APH1B) and PSENEN. Widely expressed. Expressed in leukocytes, lung, placenta, small intestine, liver, kidney, spleen thymus, skeletal muscle, heart and brain.

It localises to the endoplasmic reticulum membrane. The protein resides in the golgi apparatus. The protein localises to the golgi stack membrane. Its subcellular location is the cell membrane. It is found in the membrane. In terms of biological role, essential subunit of the gamma-secretase complex, an endoprotease complex that catalyzes the intramembrane cleavage of integral membrane proteins such as Notch receptors and APP (amyloid-beta precursor protein). The gamma-secretase complex plays a role in Notch and Wnt signaling cascades and regulation of downstream processes via its role in processing key regulatory proteins, and by regulating cytosolic CTNNB1 levels. PSENEN modulates both endoproteolysis of presenilin and gamma-secretase activity. This chain is Gamma-secretase subunit PEN-2 (PSENEN), found in Homo sapiens (Human).